The following is a 572-amino-acid chain: Secreted triacylglycerol lipase LIP6 (572 aa).

The first 23 residues, 1–23 (MYSTSLLRWLVVALVSAVPLVTA), serve as a signal peptide directing secretion. Cysteines 117 and 291 form a disulfide. The active-site Nucleophile is the Ser-202. Asp-351 is a catalytic residue. N-linked (GlcNAc...) asparagine glycosylation occurs at Asn-360. The active site involves His-385. The tract at residues 468–572 (KGGVWNDVLK…SSRRHVARFM (105 aa)) is disordered. Basic and acidic residues predominate over residues 491–511 (PESKKATKKYKSESKAEKKQP). Low complexity predominate over residues 512–525 (DSIPSSSSKSSSDN). Asn-525 carries an N-linked (GlcNAc...) asparagine glycan. Residues 528 to 540 (AHAKYHAHGHGHG) show a composition bias toward basic residues. The span at 541–562 (HASSNSNNGHSHSAKESSTSKG) shows a compositional bias: low complexity. The segment covering 563-572 (SSRRHVARFM) has biased composition (basic residues).

This sequence belongs to the AB hydrolase superfamily. Lipase family. Class Lip subfamily.

The protein localises to the secreted. It localises to the cell wall. It carries out the reaction a triacylglycerol + H2O = a diacylglycerol + a fatty acid + H(+). The catalysed reaction is a monoacylglycerol + H2O = glycerol + a fatty acid + H(+). The enzyme catalyses a diacylglycerol + H2O = a monoacylglycerol + a fatty acid + H(+). Secreted lipase involved in Dandruff and seborrheic dermatitis (D/SD) probably via lipase-mediated breakdown of sebaceous lipids and release of irritating free fatty acids. Shows only minimal activity against triolein. Mostly converts monoolein to di- and triolein, while free fatty acids are only produced in low amounts. This chain is Secreted triacylglycerol lipase LIP6, found in Malassezia globosa (strain ATCC MYA-4612 / CBS 7966) (Dandruff-associated fungus).